Here is a 243-residue protein sequence, read N- to C-terminus: Probable fructoselysine utilization operon transcriptional repressor (243 aa).

Positions glutamine 10–glutamine 78 constitute an HTH gntR-type domain. A DNA-binding region (H-T-H motif) is located at residues glutamate 38–serine 57.

The protein operates within carbohydrate metabolism; fructoselysine degradation [regulation]. May regulate the transcription of the frlABCDR operon, involved in the utilization of fructoselysine and psicoselysine. In Escherichia coli (strain K12), this protein is Probable fructoselysine utilization operon transcriptional repressor.